A 158-amino-acid polypeptide reads, in one-letter code: Ribonuclease H (158 aa).

Positions 3–144 constitute an RNase H type-1 domain; sequence ELKLIHIFTD…CDQLARAAAE (142 aa). Residues D12, E50, D72, and D136 each coordinate Mg(2+).

The protein belongs to the RNase H family. As to quaternary structure, monomer. The cofactor is Mg(2+).

It is found in the cytoplasm. The catalysed reaction is Endonucleolytic cleavage to 5'-phosphomonoester.. In terms of biological role, endonuclease that specifically degrades the RNA of RNA-DNA hybrids. This chain is Ribonuclease H, found in Shewanella sp. (strain MR-7).